We begin with the raw amino-acid sequence, 459 residues long: Cysteine--tRNA ligase (459 aa).

Zn(2+) is bound at residue Cys28. Residues 30 to 40 (VTIYDLCHIGH) carry the 'HIGH' region motif. Residues Cys209, His234, and Glu238 each contribute to the Zn(2+) site. Positions 266–270 (KMSKS) match the 'KMSKS' region motif. Lys269 is a binding site for ATP.

The protein belongs to the class-I aminoacyl-tRNA synthetase family. Monomer. The cofactor is Zn(2+).

The protein resides in the cytoplasm. It catalyses the reaction tRNA(Cys) + L-cysteine + ATP = L-cysteinyl-tRNA(Cys) + AMP + diphosphate. This chain is Cysteine--tRNA ligase, found in Shewanella baltica (strain OS223).